The following is a 96-amino-acid chain: Integration host factor subunit alpha (96 aa).

It belongs to the bacterial histone-like protein family. Heterodimer of an alpha and a beta chain.

Its function is as follows. This protein is one of the two subunits of integration host factor, a specific DNA-binding protein that functions in genetic recombination as well as in transcriptional and translational control. The sequence is that of Integration host factor subunit alpha from Haemophilus influenzae (strain 86-028NP).